Here is a 215-residue protein sequence, read N- to C-terminus: Large ribosomal subunit protein uL4c (215 aa).

Residues 48-57 (SQRQGTISTK) show a composition bias toward polar residues. The disordered stretch occupies residues 48-85 (SQRQGTISTKTRSEVRGGGRKPWRQKGTGRARAGSSRS). Residues 65–76 (GGRKPWRQKGTG) show a composition bias toward basic residues.

Belongs to the universal ribosomal protein uL4 family. In terms of assembly, part of the 50S ribosomal subunit.

Its subcellular location is the plastid. The protein resides in the chloroplast. In terms of biological role, probably binds the 23S rRNA. The sequence is that of Large ribosomal subunit protein uL4c (rpl4) from Trieres chinensis (Marine centric diatom).